Reading from the N-terminus, the 245-residue chain is tRNA pseudouridine synthase A (245 aa).

The active-site Nucleophile is the aspartate 52. Tyrosine 111 serves as a coordination point for substrate.

It belongs to the tRNA pseudouridine synthase TruA family. Homodimer.

It catalyses the reaction uridine(38/39/40) in tRNA = pseudouridine(38/39/40) in tRNA. Formation of pseudouridine at positions 38, 39 and 40 in the anticodon stem and loop of transfer RNAs. The chain is tRNA pseudouridine synthase A from Rickettsia akari (strain Hartford).